The chain runs to 616 residues: Proline--tRNA ligase (616 aa).

It belongs to the class-II aminoacyl-tRNA synthetase family. ProS type 1 subfamily. Homodimer.

It is found in the cytoplasm. The catalysed reaction is tRNA(Pro) + L-proline + ATP = L-prolyl-tRNA(Pro) + AMP + diphosphate. Functionally, catalyzes the attachment of proline to tRNA(Pro) in a two-step reaction: proline is first activated by ATP to form Pro-AMP and then transferred to the acceptor end of tRNA(Pro). As ProRS can inadvertently accommodate and process non-cognate amino acids such as alanine and cysteine, to avoid such errors it has two additional distinct editing activities against alanine. One activity is designated as 'pretransfer' editing and involves the tRNA(Pro)-independent hydrolysis of activated Ala-AMP. The other activity is designated 'posttransfer' editing and involves deacylation of mischarged Ala-tRNA(Pro). The misacylated Cys-tRNA(Pro) is not edited by ProRS. In Lactococcus lactis subsp. cremoris (strain SK11), this protein is Proline--tRNA ligase.